Here is a 668-residue protein sequence, read N- to C-terminus: Protein IQ-DOMAIN 14 (668 aa).

A calmodulin-binding region spans residues 1–11 (MVKKGSWFSAI). 2 disordered regions span residues 16–54 (TPHS…FLPI) and 66–305 (GEAE…PRAV). Over residues 18 to 31 (HSKEKLANEPERKS) the composition is skewed to basic and acidic residues. Over residues 32–43 (GKEKKKKGFGKL) the composition is skewed to basic residues. Pro residues predominate over residues 78-96 (PPTPDRPNPYSASPPPRPA). Composition is skewed to low complexity over residues 97–120 (SPRV…SPRA) and 166–175 (PSSASANAPP). The span at 269–279 (PTTPKPPSPRS) shows a compositional bias: pro residues. IQ domains follow at residues 321–350 (QHAS…LVRL) and 343–372 (ALKG…YMQQ). Disordered stretches follow at residues 399-431 (AKWA…KTDA) and 476-561 (SPAP…SLTS). Over residues 415–431 (VLTKEERDSRSQRKTDA) the composition is skewed to basic and acidic residues. A compositionally biased stretch (polar residues) spans 516 to 529 (DTSTPRSSRSTFHT).

Belongs to the IQD family. Binds to multiple calmodulin (CaM) in the presence of Ca(2+) and CaM-like proteins. In terms of tissue distribution, expressed in hypocotyls, cotyledons, leaves and petioles.

It localises to the cell membrane. Its subcellular location is the cytoplasm. The protein localises to the cytoskeleton. May be involved in cooperative interactions with calmodulins or calmodulin-like proteins. Recruits calmodulin proteins to microtubules, thus being a potential scaffold in cellular signaling and trafficking. Regulates cell and organ shapes (prevents twisting) in aerial parts probably by regulating transverse microtubules (MT) arrays alignment. Regulates the formation of oval xylem secondary cell-wall deposition pits through microtubule-dependent lateral inhibition of Rho GTPase domains, thus confining the area of active ROP domains within the lattice of the cortical microtubules. May associate with nucleic acids and regulate gene expression at the transcriptional or post-transcriptional level. This chain is Protein IQ-DOMAIN 14, found in Arabidopsis thaliana (Mouse-ear cress).